The following is an 866-amino-acid chain: Translation initiation factor IF-2 (866 aa).

Disordered regions lie at residues 1-63 (MTND…AAVQ) and 92-257 (VVRA…RGRS). Positions 26 to 36 (ETGQVRQSFSH) are enriched in polar residues. Basic and acidic residues predominate over residues 92 to 135 (VVRAAEEAERKRLEEIERRRREEEEARLKVEEEARRKAEEEAAR). Low complexity-rich tracts occupy residues 152 to 164 (VAPA…AAPQ) and 179 to 197 (PDAS…TEAP). Positions 365–533 (SRPPVVTVMG…AILLQSEILD (169 aa)) constitute a tr-type G domain. A G1 region spans residues 374 to 381 (GHVDHGKT). Residue 374-381 (GHVDHGKT) coordinates GTP. Positions 399–403 (GITQH) are G2. The G3 stretch occupies residues 421–424 (DTPG). GTP-binding positions include 421-425 (DTPGH) and 475-478 (NKMD). Residues 475–478 (NKMD) are G4. Positions 511–513 (SAK) are G5.

This sequence belongs to the TRAFAC class translation factor GTPase superfamily. Classic translation factor GTPase family. IF-2 subfamily.

It localises to the cytoplasm. In terms of biological role, one of the essential components for the initiation of protein synthesis. Protects formylmethionyl-tRNA from spontaneous hydrolysis and promotes its binding to the 30S ribosomal subunits. Also involved in the hydrolysis of GTP during the formation of the 70S ribosomal complex. The chain is Translation initiation factor IF-2 from Rhodospirillum rubrum (strain ATCC 11170 / ATH 1.1.1 / DSM 467 / LMG 4362 / NCIMB 8255 / S1).